The primary structure comprises 147 residues: Small ribosomal subunit protein uS12 (147 aa).

The protein belongs to the universal ribosomal protein uS12 family. In terms of assembly, part of the 30S ribosomal subunit.

Functionally, with S4 and S5 plays an important role in translational accuracy. Located at the interface of the 30S and 50S subunits. The polypeptide is Small ribosomal subunit protein uS12 (Methanococcus maripaludis (strain C7 / ATCC BAA-1331)).